Consider the following 165-residue polypeptide: 3-isopropylmalate dehydratase small subunit (165 aa).

The protein belongs to the LeuD family. LeuD type 2 subfamily. As to quaternary structure, heterodimer of LeuC and LeuD.

The enzyme catalyses (2R,3S)-3-isopropylmalate = (2S)-2-isopropylmalate. Its pathway is amino-acid biosynthesis; L-leucine biosynthesis; L-leucine from 3-methyl-2-oxobutanoate: step 2/4. Functionally, catalyzes the isomerization between 2-isopropylmalate and 3-isopropylmalate, via the formation of 2-isopropylmaleate. This Saccharolobus islandicus (strain M.14.25 / Kamchatka #1) (Sulfolobus islandicus) protein is 3-isopropylmalate dehydratase small subunit.